The sequence spans 283 residues: Nucleoid occlusion protein (283 aa).

The H-T-H motif DNA-binding region spans 148-167 (EALAQRLGKGQSTIANKLRL).

It belongs to the ParB family.

Its subcellular location is the cytoplasm. The protein localises to the nucleoid. Functionally, effects nucleoid occlusion by binding relatively nonspecifically to DNA and preventing the assembly of the division machinery in the vicinity of the nucleoid, especially under conditions that disturb the cell cycle. It helps to coordinate cell division and chromosome segregation by preventing the formation of the Z ring through the nucleoid, which would cause chromosome breakage. This chain is Nucleoid occlusion protein, found in Bacillus licheniformis (strain ATCC 14580 / DSM 13 / JCM 2505 / CCUG 7422 / NBRC 12200 / NCIMB 9375 / NCTC 10341 / NRRL NRS-1264 / Gibson 46).